Consider the following 443-residue polypeptide: SURP and G-patch domain-containing protein 1-like protein (443 aa).

2 disordered regions span residues 45–71 (IISN…KGGK) and 83–141 (LAPP…TVKK). The SURP motif repeat unit spans residues 142–185 (VADKLASFVAKHGRPFEHITRQKNPGDTPFKFLFDENCADYKYY). Disordered stretches follow at residues 198–221 (QTKD…AIPL), 241–272 (TPVE…RGAD), and 285–325 (AQEE…HHMG). The span at 248–265 (SSRSAQASITRPSDSDSF) shows a compositional bias: polar residues. A compositionally biased stretch (basic and acidic residues) spans 285 to 300 (AQEEKMRRPRQSKDEM). Residues 307-316 (QGPSETSSTD) are compositionally biased toward polar residues. The region spanning 360 to 407 (ADNVGHKLLSKMGWKEGEGIGSSRKGMADPIMAGDVKTNNLGVGASAP) is the G-patch domain.

It localises to the nucleus. This Arabidopsis thaliana (Mouse-ear cress) protein is SURP and G-patch domain-containing protein 1-like protein.